The following is a 264-amino-acid chain: Small ribosomal subunit protein uS3 (264 aa).

In terms of domain architecture, KH type-2 spans 39–107; it reads VREYLKKKLK…PVHVNIEEIR (69 aa). The tract at residues 214-264 is disordered; sequence PVETAAPREEERRPRRAPRGDRPDGARNGRPGGGRGRAPRKADAAPAPEGE. The span at 219 to 240 shows a compositional bias: basic and acidic residues; that stretch reads APREEERRPRRAPRGDRPDGAR.

It belongs to the universal ribosomal protein uS3 family. In terms of assembly, part of the 30S ribosomal subunit. Forms a tight complex with proteins S10 and S14.

Its function is as follows. Binds the lower part of the 30S subunit head. Binds mRNA in the 70S ribosome, positioning it for translation. This chain is Small ribosomal subunit protein uS3, found in Bordetella avium (strain 197N).